A 337-amino-acid polypeptide reads, in one-letter code: tRNA N6-adenosine threonylcarbamoyltransferase (337 aa).

Fe cation-binding residues include His111 and His115. Substrate-binding positions include 134 to 138, Asp167, Gly180, and Asn272; that span reads LVSGG. A Fe cation-binding site is contributed by Asp300.

This sequence belongs to the KAE1 / TsaD family. Fe(2+) serves as cofactor.

It localises to the cytoplasm. The enzyme catalyses L-threonylcarbamoyladenylate + adenosine(37) in tRNA = N(6)-L-threonylcarbamoyladenosine(37) in tRNA + AMP + H(+). Its function is as follows. Required for the formation of a threonylcarbamoyl group on adenosine at position 37 (t(6)A37) in tRNAs that read codons beginning with adenine. Is involved in the transfer of the threonylcarbamoyl moiety of threonylcarbamoyl-AMP (TC-AMP) to the N6 group of A37, together with TsaE and TsaB. TsaD likely plays a direct catalytic role in this reaction. The sequence is that of tRNA N6-adenosine threonylcarbamoyltransferase from Salmonella schwarzengrund (strain CVM19633).